The chain runs to 326 residues: ATP synthase subunit b 2 (326 aa).

Residues 2–22 (LIDWFTVVAQALNFLILVWLL) traverse the membrane as a helical segment. Basic and acidic residues-rich tracts occupy residues 275-298 (QQGR…RKEN) and 306-326 (PPPE…IGSP). The segment at 275–326 (QQGRKEGRAVQNWDKAESEIRKENLSPAKTEPPPEAKAKPKPEEPKPEIGSP) is disordered.

Belongs to the ATPase B chain family. In terms of assembly, F-type ATPases have 2 components, F(1) - the catalytic core - and F(0) - the membrane proton channel. F(1) has five subunits: alpha(3), beta(3), gamma(1), delta(1), epsilon(1). F(0) has three main subunits: a(1), b(2) and c(10-14). The alpha and beta chains form an alternating ring which encloses part of the gamma chain. F(1) is attached to F(0) by a central stalk formed by the gamma and epsilon chains, while a peripheral stalk is formed by the delta and b chains.

The protein localises to the cell inner membrane. In terms of biological role, f(1)F(0) ATP synthase produces ATP from ADP in the presence of a proton or sodium gradient. F-type ATPases consist of two structural domains, F(1) containing the extramembraneous catalytic core and F(0) containing the membrane proton channel, linked together by a central stalk and a peripheral stalk. During catalysis, ATP synthesis in the catalytic domain of F(1) is coupled via a rotary mechanism of the central stalk subunits to proton translocation. Component of the F(0) channel, it forms part of the peripheral stalk, linking F(1) to F(0). This Albidiferax ferrireducens (strain ATCC BAA-621 / DSM 15236 / T118) (Rhodoferax ferrireducens) protein is ATP synthase subunit b 2.